Here is a 118-residue protein sequence, read N- to C-terminus: Large ribosomal subunit protein uL18 (118 aa).

The protein belongs to the universal ribosomal protein uL18 family. Part of the 50S ribosomal subunit; part of the 5S rRNA/L5/L18/L25 subcomplex. Contacts the 5S and 23S rRNAs.

In terms of biological role, this is one of the proteins that bind and probably mediate the attachment of the 5S RNA into the large ribosomal subunit, where it forms part of the central protuberance. The chain is Large ribosomal subunit protein uL18 from Helicobacter pylori (strain P12).